Here is a 934-residue protein sequence, read N- to C-terminus: LPS-assembly protein LptD (934 aa).

The signal sequence occupies residues 1 to 33 (MALKSPAFRRKFPLLVTGGLLALQPFATSYVVA). The tract at residues 52–86 (KSPVNNLPPRPVHDGAALTSGTEAPSAEAESADKP) is disordered.

This sequence belongs to the LptD family. In terms of assembly, component of the lipopolysaccharide transport and assembly complex. Interacts with LptE and LptA.

Its subcellular location is the cell outer membrane. Together with LptE, is involved in the assembly of lipopolysaccharide (LPS) at the surface of the outer membrane. The chain is LPS-assembly protein LptD from Pseudomonas putida (strain W619).